The chain runs to 627 residues: Endoglucanase 5 (627 aa).

The first 26 residues, 1–26, serve as a signal peptide directing secretion; that stretch reads MRKFGGSLFGVSLLLSVLLAAATAAA. Asp-83 functions as the Nucleophile in the catalytic mechanism. N-linked (GlcNAc...) asparagine glycosylation is present at Asn-196. His-416 is a catalytic residue. N-linked (GlcNAc...) asparagine glycosylation is present at Asn-465. Residues Asp-468 and Glu-477 contribute to the active site. An N-linked (GlcNAc...) asparagine glycan is attached at Asn-561.

This sequence belongs to the glycosyl hydrolase 9 (cellulase E) family.

Its subcellular location is the secreted. It carries out the reaction Endohydrolysis of (1-&gt;4)-beta-D-glucosidic linkages in cellulose, lichenin and cereal beta-D-glucans.. The polypeptide is Endoglucanase 5 (Arabidopsis thaliana (Mouse-ear cress)).